Reading from the N-terminus, the 69-residue chain is MRKKQKSAVENETVYLHTRGVIKDNAVMALLGDKLFRQRVEKKRKGKGSYQRKAKHPGKIFEKPDYKFF.

The protein belongs to the alternative ribosome-rescue factor A family. In terms of assembly, interacts with the 70S ribosome and release factor 2.

Its function is as follows. Rescues ribosomes stalled at the 3' end of non-stop mRNAs. Recruits release factor 2 (RF2) to the stalled ribosome, helping position it correctly in the ribosomal A site so its GGQ motif can hydrolyze the peptidyl-tRNA bond. The protein is Alternative ribosome-rescue factor A (arfA) of Haemophilus influenzae (strain ATCC 51907 / DSM 11121 / KW20 / Rd).